The following is a 244-amino-acid chain: Complement C1q subcomponent subunit A (244 aa).

Residues 1-22 (MEAPRGWLVISVLAISLASSVT) form the signal peptide. A disordered region spans residues 28 to 94 (APDGTHGSAG…PGPSGPMGPA (67 aa)). One can recognise a Collagen-like domain in the interval 31–109 (GTHGSAGIPG…KGTKGSPGNI (79 aa)). 2 positions are modified to 4-hydroxyproline: proline 39 and proline 45. Lysine 48 carries the 5-hydroxylysine modification. Residue lysine 48 is glycosylated (O-linked (Gal...) hydroxylysine). Proline 54 and proline 57 each carry 4-hydroxyproline. 5-hydroxylysine is present on lysine 67. An O-linked (Gal...) hydroxylysine glycan is attached at lysine 67. Proline 73, proline 79, and proline 85 each carry 4-hydroxyproline. A compositionally biased stretch (low complexity) spans 79 to 94 (PGRMGYPGPSGPMGPA). Lysine 100 carries the 5-hydroxylysine modification. Lysine 100 is a glycosylation site (O-linked (Gal...) hydroxylysine). In terms of domain architecture, C1q spans 110–244 (KDQPRPAFSA…FSGFLIFPSA (135 aa)). The N-linked (GlcNAc...) asparagine glycan is linked to asparagine 146. A disulfide bond links cysteine 172 and cysteine 189. Glutamine 198 is a binding site for Ca(2+).

In terms of assembly, core component of the complement C1 complex, a calcium-dependent complex composed of 1 molecule of the C1Q subcomplex, 2 molecules of C1R and 2 molecules of C1S. The C1Q subcomplex is composed 18 subunits: 3 chains of C1QA, C1QB, and C1QC trimerize to form 6 collagen-like triple helices connected to six globular ligand-recognition modules (C1q domain). Interacts with CR1 (via Sushi 24 and Sushi 25 domains). Interacts (via C-terminus) with CD33; this interaction activates CD33 inhibitory motifs. O-linked glycans are assumed to be the Glc-Gal disaccharides typically found as secondary modifications of hydroxylated lysines in collagen-like domains.

The protein resides in the secreted. Its subcellular location is the cell surface. With respect to regulation, the C1Q subcomplex is inhibited by sulfated molecules, such as triterpenoid sulfates, heparan sulfate, or chondroitin sulfates. Core component of the complement C1 complex, a multiprotein complex that initiates the classical pathway of the complement system, a cascade of proteins that leads to phagocytosis and breakdown of pathogens and signaling that strengthens the adaptive immune system. The classical complement pathway is initiated by the C1Q subcomplex of the C1 complex, which specifically binds IgG or IgM immunoglobulins complexed with antigens, forming antigen-antibody complexes on the surface of pathogens: C1QA, together with C1QB and C1QC, specifically recognizes and binds the Fc regions of IgG or IgM via its C1q domain. Immunoglobulin-binding activates the proenzyme C1R, which cleaves C1S, initiating the proteolytic cascade of the complement system. The C1Q subcomplex is activated by a hexamer of IgG complexed with antigens, while it is activated by a pentameric IgM. The C1Q subcomplex also recognizes and binds phosphatidylserine exposed on the surface of cells undergoing programmed cell death, possibly promoting activation of the complement system. The polypeptide is Complement C1q subcomponent subunit A (C1QA) (Bos taurus (Bovine)).